Reading from the N-terminus, the 460-residue chain is Benzyl alcohol O-benzoyltransferase (460 aa).

Active-site proton acceptor residues include His167 and Asp382.

Belongs to the plant acyltransferase family.

It catalyses the reaction benzyl alcohol + benzoyl-CoA = benzyl benzoate + CoA. Its function is as follows. Probably involved in the formation of volatile ester benzylbenzoate. The sequence is that of Benzyl alcohol O-benzoyltransferase (HSR201) from Nicotiana tabacum (Common tobacco).